The sequence spans 693 residues: Putative tyrosinase-like protein tyr-3 (693 aa).

The first 18 residues, 1–18, serve as a signal peptide directing secretion; the sequence is MIRYIILLVYFLIFEVNS. 6 residues coordinate Cu cation: histidine 142, histidine 152, histidine 161, histidine 281, histidine 285, and histidine 308. 4 ShKT domains span residues 472 to 506, 516 to 550, 591 to 625, and 634 to 667; these read CFNE…CRQC, CSDR…CQKC, CYNE…CGVC, and CADY…CNTC. Disulfide bonds link cysteine 472–cysteine 506, cysteine 479–cysteine 499, cysteine 488–cysteine 503, cysteine 516–cysteine 550, cysteine 523–cysteine 543, cysteine 532–cysteine 547, cysteine 591–cysteine 625, cysteine 598–cysteine 618, cysteine 607–cysteine 622, cysteine 634–cysteine 667, cysteine 641–cysteine 660, and cysteine 650–cysteine 664.

This sequence belongs to the tyrosinase family. Cu(2+) is required as a cofactor.

The chain is Putative tyrosinase-like protein tyr-3 (tyr-3) from Caenorhabditis elegans.